Consider the following 568-residue polypeptide: Cytochrome P450 monooxygenase 41 (568 aa).

A helical membrane pass occupies residues 21–41 (LTSLVPLILSVMVCLIATVTI). N321 and N377 each carry an N-linked (GlcNAc...) asparagine glycan. C514 provides a ligand contact to heme.

Belongs to the cytochrome P450 family. The cofactor is heme.

The protein resides in the membrane. Its pathway is secondary metabolite biosynthesis. In terms of biological role, cytochrome P450 monooxygenase that is able to use 3,5-dimethoxy-trans-stilbene and 3,5,4'-trimethoxy-trans-stilbene as substrates for oxidation. This Postia placenta (strain ATCC 44394 / Madison 698-R) (Brown rot fungus) protein is Cytochrome P450 monooxygenase 41.